Reading from the N-terminus, the 811-residue chain is Ribonucleoside-diphosphate reductase large subunit (811 aa).

Substrate is bound by residues threonine 231, 246–247, glycine 277, 450–454, and 636–640; these read SC, NLCTE, and PTASS. A disulfide bridge links cysteine 247 with cysteine 467. Asparagine 450 functions as the Proton acceptor in the catalytic mechanism. The Cysteine radical intermediate role is filled by cysteine 452. Glutamate 454 functions as the Proton acceptor in the catalytic mechanism.

Belongs to the ribonucleoside diphosphate reductase large chain family. In terms of assembly, heterotetramer composed of a homodimer of the large subunit (R1) and a homodimer of the small subunit (R2). Larger multisubunit protein complex are also active, composed of (R1)n(R2)n.

The enzyme catalyses a 2'-deoxyribonucleoside 5'-diphosphate + [thioredoxin]-disulfide + H2O = a ribonucleoside 5'-diphosphate + [thioredoxin]-dithiol. In terms of biological role, ribonucleoside-diphosphate reductase holoenzyme provides the precursors necessary for viral DNA synthesis. Allows virus growth in non-dividing cells, as well as reactivation from latency in infected hosts. Catalyzes the biosynthesis of deoxyribonucleotides from the corresponding ribonucleotides. The polypeptide is Ribonucleoside-diphosphate reductase large subunit (Amazona oratrix (yellow-headed parrot)).